The chain runs to 43 residues: Protein PsbN (43 aa).

The helical transmembrane segment at 5–27 threads the bilayer; sequence TLVAISISRLLVSFTGYALYTAF.

Belongs to the PsbN family.

The protein localises to the plastid. It is found in the chloroplast thylakoid membrane. In terms of biological role, may play a role in photosystem I and II biogenesis. This chain is Protein PsbN, found in Cycas taitungensis (Prince sago).